We begin with the raw amino-acid sequence, 91 residues long: Small ribosomal subunit protein uS19 (91 aa).

Belongs to the universal ribosomal protein uS19 family.

In terms of biological role, protein S19 forms a complex with S13 that binds strongly to the 16S ribosomal RNA. The chain is Small ribosomal subunit protein uS19 from Pseudomonas fluorescens (strain Pf0-1).